We begin with the raw amino-acid sequence, 889 residues long: Alanine--tRNA ligase (889 aa).

Residues His564, His568, Cys671, and His675 each coordinate Zn(2+).

Belongs to the class-II aminoacyl-tRNA synthetase family. Requires Zn(2+) as cofactor.

Its subcellular location is the cytoplasm. The catalysed reaction is tRNA(Ala) + L-alanine + ATP = L-alanyl-tRNA(Ala) + AMP + diphosphate. Its function is as follows. Catalyzes the attachment of alanine to tRNA(Ala) in a two-step reaction: alanine is first activated by ATP to form Ala-AMP and then transferred to the acceptor end of tRNA(Ala). Also edits incorrectly charged Ser-tRNA(Ala) and Gly-tRNA(Ala) via its editing domain. The protein is Alanine--tRNA ligase of Pelagibacter ubique (strain HTCC1062).